The primary structure comprises 172 residues: RNA silencing suppressor p19 (172 aa).

A compositionally biased stretch (basic and acidic residues) spans 1–20 (MERVIQGNDAREQANGERWD). The segment at 1-37 (MERVIQGNDAREQANGERWDGGSGGTTSGFKLPDESP) is disordered.

Belongs to the tombusvirus protein p19 family. As to quaternary structure, homodimer.

In terms of biological role, viral suppressor of RNA silencing which binds specifically to silencing RNAs (siRNAs). Acts as a molecular caliper to specifically select siRNAs based on the length of the duplex region of the RNA. This Cynara cardunculus var. scolymus (Globe artichoke) protein is RNA silencing suppressor p19.